The following is a 284-amino-acid chain: 3-methyl-2-oxobutanoate hydroxymethyltransferase 2 (284 aa).

Positions 49 and 88 each coordinate Mg(2+). Residues D49–S50, D88, and K118 each bind 3-methyl-2-oxobutanoate. Residue E120 coordinates Mg(2+). The active-site Proton acceptor is the E187.

The protein belongs to the PanB family. In terms of assembly, homodecamer; pentamer of dimers. Mg(2+) is required as a cofactor.

Its subcellular location is the cytoplasm. It carries out the reaction 3-methyl-2-oxobutanoate + (6R)-5,10-methylene-5,6,7,8-tetrahydrofolate + H2O = 2-dehydropantoate + (6S)-5,6,7,8-tetrahydrofolate. It functions in the pathway cofactor biosynthesis; (R)-pantothenate biosynthesis; (R)-pantoate from 3-methyl-2-oxobutanoate: step 1/2. Its function is as follows. Catalyzes the reversible reaction in which hydroxymethyl group from 5,10-methylenetetrahydrofolate is transferred onto alpha-ketoisovalerate to form ketopantoate. The sequence is that of 3-methyl-2-oxobutanoate hydroxymethyltransferase 2 from Burkholderia cenocepacia (strain HI2424).